The primary structure comprises 148 residues: Protein SOB FIVE-LIKE 1 (148 aa).

Over residues 1-10 the composition is skewed to basic and acidic residues; sequence MESPRNHGGS. Disordered regions lie at residues 1 to 20 and 33 to 148; these read MESPRNHGGSEEEEYSSCES and NDQS…SKTK. Residues 20-25 carry the SOFL-A motif; sequence SGWTMY. The span at 54–76 shows a compositional bias: acidic residues; that stretch reads DGYENDDGDTSDDGGDEESDDSM. The SOFL-B signature appears at 75–84; it reads SMASDASSGP. Positions 91–101 are enriched in basic residues; it reads HINKHAARKNG. Residues 111–128 are compositionally biased toward basic and acidic residues; that stretch reads QHTEKTISNEGEKSDLKA.

The protein belongs to the SOFL plant protein family. In terms of tissue distribution, predominantly expressed in the vascular tissues of seedlings, developing leaves, flowers and siliques, but barely detectable in roots and stems.

It localises to the cytoplasm. Its subcellular location is the nucleus. Its function is as follows. Involved in cytokinin-mediated development. Together with SOFL2, triggers the endogenous content of specific bioactive cytokinins derived from the biosynthetic intermediates trans-zeatin riboside monophosphate (tZRMP) and N(6)-(Delta(2)-isopentenyl)adenosine monophosphate (iPRMP) such as N-glucosides trans-zeatin 7-glucoside (tZ7G), cis-zeatin 7-glucoside (cZ7G) and N(6)-(Delta(2)-isopentenyl)adenine 7-glucoside (iP7G). This Arabidopsis thaliana (Mouse-ear cress) protein is Protein SOB FIVE-LIKE 1.